A 33-amino-acid chain; its full sequence is uncharacterized protein (33 aa).

This is an uncharacterized protein from Saccharomyces cerevisiae (strain ATCC 204508 / S288c) (Baker's yeast).